The chain runs to 259 residues: uncharacterized protein (259 aa).

It to M.thermoautotrophicum MTH738.

This is an uncharacterized protein from Methanocaldococcus jannaschii (strain ATCC 43067 / DSM 2661 / JAL-1 / JCM 10045 / NBRC 100440) (Methanococcus jannaschii).